We begin with the raw amino-acid sequence, 80 residues long: UPF0180 protein GK1051 (80 aa).

The protein belongs to the UPF0180 family.

The chain is UPF0180 protein GK1051 from Geobacillus kaustophilus (strain HTA426).